The chain runs to 411 residues: Zinc finger protein draculin (411 aa).

The interval methionine 1–lysine 33 is disordered. A compositionally biased stretch (basic and acidic residues) spans cysteine 8 to alanine 32. 13 C2H2-type zinc fingers span residues valine 36 to histidine 58, tyrosine 64 to histidine 86, tyrosine 92 to histidine 114, tyrosine 120 to histidine 142, histidine 148 to histidine 170, tyrosine 176 to histidine 198, tyrosine 204 to histidine 226, phenylalanine 232 to histidine 254, tyrosine 260 to histidine 282, phenylalanine 288 to histidine 310, tyrosine 316 to histidine 338, phenylalanine 344 to histidine 366, and tyrosine 372 to histidine 394.

Specifically expressed in the hematopoietic lineage during embryogenesis; first expressed at the late blastula stage around the blastoderm margin. During gastrulation, restricted to the ventral mesoderm, the presumptive prechordal plate and the dorso-marginal cells of the organizer. At the 3-somite stage, strongly expressed in a caudal domain (marking the erythroid lineage) and a cephalic domain of the lateral mesoderm. At the 8- to 10-somite stage, caudal expression is in two bands of lateral mesoderm which later converge at the midline. Anterior expression is also in two bands of lateral mesoderm which converge as two patches at the midline by the 15-somite stage, with increased scattering of single cells (macrophage precursors) away from the midline to the yolksac. Once at the yolksac, expression is lost. By 20-24 hours post-fertilization (hpf), expressed in proerythroblasts in the erythroid blood island centered above the uro-genital opening. Expression persists in circulating erythroblasts but is lost in mature erythrocytes.

This Danio rerio (Zebrafish) protein is Zinc finger protein draculin.